Consider the following 115-residue polypeptide: Large ribosomal subunit protein P1 (115 aa).

Positions Q56–E73 are enriched in low complexity. The tract at residues Q56 to G115 is disordered. A compositionally biased stretch (acidic residues) spans G74–S106.

The protein belongs to the eukaryotic ribosomal protein P1/P2 family. As to quaternary structure, part of the 50S ribosomal subunit. Homodimer, it forms part of the ribosomal stalk which helps the ribosome interact with GTP-bound translation factors. Forms a heptameric uL10/P0(P1)2(P1)2(P1)2 complex, where uL10/P0 forms an elongated spine to which the P1 dimers bind in a sequential fashion.

In terms of biological role, forms part of the ribosomal stalk, playing a central role in the interaction of the ribosome with GTP-bound translation factors. The protein is Large ribosomal subunit protein P1 of Haloarcula marismortui (strain ATCC 43049 / DSM 3752 / JCM 8966 / VKM B-1809) (Halobacterium marismortui).